The primary structure comprises 383 residues: GTP-binding protein 10 homolog (383 aa).

In terms of domain architecture, Obg spans 22–157 (PTFLDTLRLA…RTVNLDLKLI (136 aa)). The 196-residue stretch at 158-353 (ADVGLVGFPN…VKSQLRRTLV (196 aa)) folds into the OBG-type G domain. GTP contacts are provided by residues 164-171 (GFPNAGKS), 211-215 (DLPGL), and 287-290 (NKMD).

The protein belongs to the TRAFAC class OBG-HflX-like GTPase superfamily. OBG GTPase family.

The protein localises to the nucleus. It is found in the nucleolus. In terms of biological role, may be involved in the ribosome maturation process. This is GTP-binding protein 10 homolog from Drosophila melanogaster (Fruit fly).